A 118-amino-acid polypeptide reads, in one-letter code: Large ribosomal subunit protein bL20 (118 aa).

This sequence belongs to the bacterial ribosomal protein bL20 family.

In terms of biological role, binds directly to 23S ribosomal RNA and is necessary for the in vitro assembly process of the 50S ribosomal subunit. It is not involved in the protein synthesizing functions of that subunit. The sequence is that of Large ribosomal subunit protein bL20 from Francisella tularensis subsp. tularensis (strain WY96-3418).